The primary structure comprises 449 residues: Serine--tRNA ligase (449 aa).

256–258 (TSE) lines the L-serine pocket. 287–289 (RAE) is an ATP binding site. Glu310 is an L-serine binding site. Position 374 to 377 (374 to 377 (EISS)) interacts with ATP. Ser410 is an L-serine binding site.

Belongs to the class-II aminoacyl-tRNA synthetase family. Type-1 seryl-tRNA synthetase subfamily. In terms of assembly, homodimer. The tRNA molecule binds across the dimer.

It localises to the cytoplasm. The enzyme catalyses tRNA(Ser) + L-serine + ATP = L-seryl-tRNA(Ser) + AMP + diphosphate + H(+). The catalysed reaction is tRNA(Sec) + L-serine + ATP = L-seryl-tRNA(Sec) + AMP + diphosphate + H(+). It participates in aminoacyl-tRNA biosynthesis; selenocysteinyl-tRNA(Sec) biosynthesis; L-seryl-tRNA(Sec) from L-serine and tRNA(Sec): step 1/1. In terms of biological role, catalyzes the attachment of serine to tRNA(Ser). Is also able to aminoacylate tRNA(Sec) with serine, to form the misacylated tRNA L-seryl-tRNA(Sec), which will be further converted into selenocysteinyl-tRNA(Sec). This is Serine--tRNA ligase from Xanthomonas oryzae pv. oryzae (strain MAFF 311018).